Here is a 647-residue protein sequence, read N- to C-terminus: DNA mismatch repair protein MutL (647 aa).

It belongs to the DNA mismatch repair MutL/HexB family.

Its function is as follows. This protein is involved in the repair of mismatches in DNA. It is required for dam-dependent methyl-directed DNA mismatch repair. May act as a 'molecular matchmaker', a protein that promotes the formation of a stable complex between two or more DNA-binding proteins in an ATP-dependent manner without itself being part of a final effector complex. This Koribacter versatilis (strain Ellin345) protein is DNA mismatch repair protein MutL.